The primary structure comprises 1066 residues: E3 ubiquitin-protein ligase RNF31 (1066 aa).

Positions 1–479 (MPGDEERGFL…PEKQRQDKMR (479 aa)) are polyubiquitin-binding. Residues 70-141 (TLSTALNILE…SFPEGQEEPD (72 aa)) enclose the PUB domain. The disordered stretch occupies residues 251 to 287 (LRQALPGSHQTASLSSSLPASSQPRPPSSSLALGDSS). Residues 262-287 (ASLSSSLPASSQPRPPSSSLALGDSS) show a composition bias toward low complexity. 2 consecutive RanBP2-type zinc fingers follow at residues 293–325 (PANACLPWHCLTCATLNEPWAVFCAVCSQPKGC) and 344–373 (ARDQWACQSCTFENEAAAVLCAICERPRLA). S377 is subject to Phosphoserine. The RanBP2-type 3 zinc-finger motif lies at 403–432 (QPQVWYCDHCTFCNSGPVWVCAMCNRTRDP). The disordered stretch occupies residues 434–478 (PTQPALQSYPSSLEKGRPKPGSSQHLGSSLPASCGDPEKQRQDKM). Residues 454 to 464 (GSSQHLGSSLP) show a composition bias toward polar residues. Basic and acidic residues predominate over residues 469–478 (DPEKQRQDKM). The interval 557 to 610 (GNLDEAVEECVRARRRKVHELQSLGFGPKEGSLQALFQHGGDVARALTELQRQR) is interaction with RBCK1. The region spanning 558–609 (NLDEAVEECVRARRRKVHELQSLGFGPKEGSLQALFQHGGDVARALTELQRQ) is the UBA domain. The tract at residues 689-923 (LAQECAVCGW…KSLHGHHPRD (235 aa)) is TRIAD supradomain. Zn(2+) contacts are provided by C693, C696, C711, C713, C716, C719, C738, C741, C793, C796, C811, C814, C819, C822, H830, C835, C865, and C868. Residues 693–743 (CAVCGWALPRNRMQALISCECTICPECFRQHFTIALKEKHITDMVCPACGR) form an RING-type 1 zinc finger. An IBR-type zinc finger spans residues 773 to 835 (ALFHKKLTEA…WEEQHRGRSC (63 aa)). The RING-type 2; atypical zinc-finger motif lies at 865-895 (CPKCKFSYALARGGCMHFHCTQCRHQFCSGC). The active site involves C879. The Zn(2+) site is built by C884, C887, C892, C895, C910, and H919. The LDD domain stretch occupies residues 904-1066 (KCPDPNCKVK…LGQSIARRRK (163 aa)).

Belongs to the RBR family. As to quaternary structure, component of the LUBAC complex (linear ubiquitin chain assembly complex) which consists of SHARPIN, RBCK1 and RNF31. LUBAC has a MW of approximately 600 kDa suggesting a heteromultimeric assembly of its subunits. Associates with the TNF-R1 signaling complex (TNF-RSC) in a stimulation-dependent manner. Interacts (via the PUB domain) with OTULIN (via the PIM motif); the interaction is direct. Interacts (via the PUB domain) with VCP (via the PIM motif). Interacts (via the PUB domain) with SPATA2 (via the PIM motif); interaction is direct and bridges RNF31 and CYLD. Interacts with CYLD; the interaction is indirect and is mediated via SPATA2. Interacts with MUSK. Interacts with CARD11, promoting linear ubiquitination of BCL10. In terms of processing, autoubiquitinated. Interaction with OTULIN is required to suppress formation of 'Met-1'-linked polyubiquitin chains and prevent subsequent inactivation of the LUBAC complex. Post-translationally, cleaved by caspase during apoptosis. In terms of tissue distribution, widely expressed (at protein level). Not expressed in heart.

It is found in the cytoplasm. It catalyses the reaction [E2 ubiquitin-conjugating enzyme]-S-ubiquitinyl-L-cysteine + [acceptor protein]-L-lysine = [E2 ubiquitin-conjugating enzyme]-L-cysteine + [acceptor protein]-N(6)-ubiquitinyl-L-lysine.. The protein operates within protein modification; protein ubiquitination. Functionally, E3 ubiquitin-protein ligase component of the LUBAC complex which conjugates linear ('Met-1'-linked) polyubiquitin chains to substrates and plays a key role in NF-kappa-B activation and regulation of inflammation. LUBAC conjugates linear polyubiquitin to IKBKG and RIPK1 and is involved in activation of the canonical NF-kappa-B and the JNK signaling pathways. Linear ubiquitination mediated by the LUBAC complex interferes with TNF-induced cell death and thereby prevents inflammation. LUBAC is recruited to the TNF-R1 signaling complex (TNF-RSC) following polyubiquitination of TNF-RSC components by BIRC2 and/or BIRC3 and to conjugate linear polyubiquitin to IKBKG and possibly other components contributing to the stability of the complex. The LUBAC complex is also involved in innate immunity by conjugating linear polyubiquitin chains at the surface of bacteria invading the cytosol to form the ubiquitin coat surrounding bacteria. LUBAC is not able to initiate formation of the bacterial ubiquitin coat, and can only promote formation of linear polyubiquitins on pre-existing ubiquitin. Recruited to the surface of bacteria by RNF213, which initiates the bacterial ubiquitin coat. The bacterial ubiquitin coat acts as an 'eat-me' signal for xenophagy and promotes NF-kappa-B activation. Together with OTULIN, the LUBAC complex regulates the canonical Wnt signaling during angiogenesis. RNF31 is required for linear ubiquitination of BCL10, thereby promoting TCR-induced NF-kappa-B activation. Binds polyubiquitin of different linkage types. The protein is E3 ubiquitin-protein ligase RNF31 of Mus musculus (Mouse).